The chain runs to 312 residues: Ribonuclease HIII (312 aa).

Positions 95 to 311 (FNCIGSDEAG…REKAQKILKP (217 aa)) constitute an RNase H type-2 domain. A divalent metal cation-binding residues include Asp101, Glu102, and Asp206.

It belongs to the RNase HII family. RnhC subfamily. Mn(2+) is required as a cofactor. Requires Mg(2+) as cofactor.

Its subcellular location is the cytoplasm. The enzyme catalyses Endonucleolytic cleavage to 5'-phosphomonoester.. Functionally, endonuclease that specifically degrades the RNA of RNA-DNA hybrids. The polypeptide is Ribonuclease HIII (Staphylococcus aureus (strain MSSA476)).